The sequence spans 282 residues: MALKQISSNRCFGGLQKVFEHSSVELKCKMRFAVYLPPQAESGKCPALYWLSGLTCTEQNFISKSGYQQAASEHGLVVIAPDTSPRGCNIKGEDDSWDFGTGAGFYVNATEDPWKANYRMYSYVTEELPQLINANFPVDPQRMSIFGHSMGGHGALICALKNPGKYRSVSAFAPICNPVLCSWGKKAFSGYLGPDESKWKAYDATCLVKAYSGSQIDILIDQGKDDEFLSNGQLLPDNFIAACTEKKIPVVFRLQEGYDHSYYFIATFIADHIRHHAKYLNA.

N-acetylalanine is present on Ala2. Lys4 is modified (N6-succinyllysine). Residue Ser149 is the Charge relay system of the active site. Residue Lys200 is modified to N6-acetyllysine. Residues Asp226 and His260 each act as charge relay system in the active site.

Belongs to the esterase D family. Homodimer.

It is found in the cytoplasm. The protein localises to the cytoplasmic vesicle. It carries out the reaction S-formylglutathione + H2O = formate + glutathione + H(+). In terms of biological role, serine hydrolase involved in the detoxification of formaldehyde. This chain is S-formylglutathione hydrolase (Esd), found in Mus musculus (Mouse).